The following is a 432-amino-acid chain: MGGCMSTPEAPKKTAETKQVPSTSTSSRPPQASTSATATAAGAGTSAANGTANGIKGDTTATNRVGTSGGQGLAAALASTEPPGAQDSKGNKDRSNQIDRQLEDDQKKFRKECKILLLGSGESGKSTIVKQMKIIHQNGYSKDELLSFRGVIYKNVLDSAQALIMAMRKIGVDPEDANNRSYADRILEYRMDAGLDAVIPSEILYNIESLWHDPVIPSVMDRSSEFYLMDSATYFFANIRKIAGPDYVPDEADVLRARTKTTGISETRFNMGQLSIHMFDVGGQRSERKKWIHCFEAVTSIIFCVALSEYDQVLLEESGQNRMQESLVLFESVINSRWFLRTSVILFLNKIDLFKQKLPKVPLVQYFPEYTGGADINKAAKYILWRFTQTNRARLSVYPHLTQATDTSNIRLVFAAVKETILQNALRDSGIL.

A disordered region spans residues 1 to 97 (MGGCMSTPEA…SKGNKDRSNQ (97 aa)). Glycine 2 carries the N-myristoyl glycine lipid modification. Residue cysteine 4 is the site of S-palmitoyl cysteine attachment. Residues 21–52 (PSTSTSSRPPQASTSATATAAGAGTSAANGTA) are compositionally biased toward low complexity. One can recognise a G-alpha domain in the interval 111–432 (KECKILLLGS…QNALRDSGIL (322 aa)). The interval 114 to 127 (KILLLGSGESGKST) is G1 motif. Residues glutamate 122, serine 123, glycine 124, lysine 125, serine 126, threonine 127, aspartate 230, leucine 255, threonine 261, glycine 283, asparagine 349, lysine 350, aspartate 352, and alanine 404 each contribute to the GTP site. Serine 126 is a Mg(2+) binding site. Positions 253 to 261 (DVLRARTKT) are G2 motif. A Mg(2+)-binding site is contributed by threonine 261. Residues 276–285 (IHMFDVGGQR) are G3 motif. The tract at residues 345–352 (ILFLNKID) is G4 motif. The segment at 402-407 (TQATDT) is G5 motif.

Belongs to the G-alpha family. As to quaternary structure, g proteins are composed of 3 units; alpha, beta and gamma. The alpha chain contains the guanine nucleotide binding site. Mg(2+) serves as cofactor.

Its function is as follows. Guanine nucleotide-binding proteins (G proteins) are involved as modulators or transducers in various transmembrane signaling systems. Involved in the mating pathway. The polypeptide is Guanine nucleotide-binding protein subunit alpha (GPA1) (Cryptococcus neoformans var. neoformans serotype D (strain B-3501A) (Filobasidiella neoformans)).